The chain runs to 105 residues: Large ribosomal subunit protein bL21 (105 aa).

This sequence belongs to the bacterial ribosomal protein bL21 family. In terms of assembly, part of the 50S ribosomal subunit. Contacts protein L20.

Functionally, this protein binds to 23S rRNA in the presence of protein L20. The protein is Large ribosomal subunit protein bL21 of Frankia casuarinae (strain DSM 45818 / CECT 9043 / HFP020203 / CcI3).